An 842-amino-acid polypeptide reads, in one-letter code: Protein P (842 aa).

Residues 1–177 (MPLSYQHFRR…FCGSPYTWEQ (177 aa)) are terminal protein domain (TP). The interval 178–345 (DLQHGAFLDG…YCLSHLVNLL (168 aa)) is spacer. The segment at 184-238 (FLDGPSRVGKEPFHQQSSRIPSRSPVGPSIQSKYQQSRLGLQSQKGPLARGQQGR) is disordered. Residues 212-228 (SIQSKYQQSRLGLQSQK) are compositionally biased toward polar residues. Residues 346–689 (QDWGPCTEHG…YMNLYPVARQ (344 aa)) are polymerase/reverse transcriptase domain (RT). Residues 356-599 (EYHIRIPRTP…YSLNFMGYVI (244 aa)) enclose the Reverse transcriptase domain. Residues D428, D550, and D551 each contribute to the Mg(2+) site.

Belongs to the hepadnaviridae P protein family.

The catalysed reaction is DNA(n) + a 2'-deoxyribonucleoside 5'-triphosphate = DNA(n+1) + diphosphate. It carries out the reaction Endonucleolytic cleavage to 5'-phosphomonoester.. Its activity is regulated as follows. Activated by host HSP70 and HSP40 in vitro to be able to bind the epsilon loop of the pgRNA. Because deletion of the RNase H region renders the protein partly chaperone-independent, the chaperones may be needed indirectly to relieve occlusion of the RNA-binding site by this domain. Inhibited by several reverse-transcriptase inhibitors: Lamivudine, Adefovir and Entecavir. Functionally, multifunctional enzyme that converts the viral RNA genome into dsDNA in viral cytoplasmic capsids. This enzyme displays a DNA polymerase activity that can copy either DNA or RNA templates, and a ribonuclease H (RNase H) activity that cleaves the RNA strand of RNA-DNA heteroduplexes in a partially processive 3'- to 5'-endonucleasic mode. Neo-synthesized pregenomic RNA (pgRNA) are encapsidated together with the P protein, and reverse-transcribed inside the nucleocapsid. Initiation of reverse-transcription occurs first by binding the epsilon loop on the pgRNA genome, and is initiated by protein priming, thereby the 5'-end of (-)DNA is covalently linked to P protein. Partial (+)DNA is synthesized from the (-)DNA template and generates the relaxed circular DNA (RC-DNA) genome. After budding and infection, the RC-DNA migrates in the nucleus, and is converted into a plasmid-like covalently closed circular DNA (cccDNA). The activity of P protein does not seem to be necessary for cccDNA generation, and is presumably released from (+)DNA by host nuclear DNA repair machinery. This is Protein P from Hepatitis B virus genotype G (isolate United States/USG17/2002) (HBV-G).